Reading from the N-terminus, the 244-residue chain is DNA polymerase sliding clamp (244 aa).

It belongs to the PCNA family. As to quaternary structure, homotrimer. The subunits circularize to form a toroid; DNA passes through its center. Replication factor C (RFC) is required to load the toroid on the DNA.

Sliding clamp subunit that acts as a moving platform for DNA processing. Responsible for tethering the catalytic subunit of DNA polymerase to DNA during high-speed replication. In conjunction with replication factor C (RFC) stimulates DNA synthesis by PolB, relieving inhibition by replication protein A (RPA). This chain is DNA polymerase sliding clamp, found in Methanothermobacter thermautotrophicus (strain ATCC 29096 / DSM 1053 / JCM 10044 / NBRC 100330 / Delta H) (Methanobacterium thermoautotrophicum).